Consider the following 434-residue polypeptide: uncharacterized protein (434 aa).

The N-terminal stretch at 1–17 (MTFLLFQLLVLLRYSIG) is a signal peptide. Transmembrane regions (helical) follow at residues 48 to 68 (AAISLDFIFIVFPMLLFFTVL), 70 to 90 (EWVYHGTGLLSLLVLILSVTA), 112 to 132 (YRVALMLITCLCILAVDFTIF), 141 to 161 (TYGTSLMDLGVGSFVLANAVV), 173 to 193 (WITGIKATAPLLLLGFIRLVT), 206 to 226 (YGVHWNFFFTLAAISILTSFV), 232 to 252 (YCGLLGFAVLAGYQTWLLSGL), 271 to 291 (EGVYSILGYWGMYLLGVHLGY), 305 to 325 (TSSIARVFLVSLLLWIVTILF), 344 to 364 (WVLAQDLQALGIFMLSSYIPL), 380 to 400 (ATFLLANLVTGMVNLTVDTIF), and 404 to 424 (FSSLLILTAYAFALSAIIGTI).

It is found in the membrane. This is an uncharacterized protein from Arabidopsis thaliana (Mouse-ear cress).